The chain runs to 83 residues: Aminoacyl carrier protein (83 aa).

Residues 1 to 80 (MNATIREILA…DTVKLILDGK (80 aa)) enclose the Carrier domain. Position 35 is an O-(pantetheine 4'-phosphoryl)serine (Ser-35).

In terms of processing, 4'-phosphopantetheine is transferred from CoA to a specific serine of the apo-form of this carrier protein.

Its function is as follows. Aminoacyl carrier protein. Can be charged with L-alanine, L-glycine or L-serine, via the formation of a thioester bond between the amino acid and the 4'-phosphopantetheinyl prosthetic group, catalyzed by the Atu2573 ligase. In Agrobacterium fabrum (strain C58 / ATCC 33970) (Agrobacterium tumefaciens (strain C58)), this protein is Aminoacyl carrier protein.